Consider the following 344-residue polypeptide: Anthranilate phosphoribosyltransferase 2 (344 aa).

Residues glycine 81, 84–85, threonine 89, 91–94, 109–117, and alanine 121 contribute to the 5-phospho-alpha-D-ribose 1-diphosphate site; these read GD, NIST, and KHGNRALSS. Anthranilate is bound at residue glycine 81. Serine 93 contacts Mg(2+). Residue asparagine 112 participates in anthranilate binding. Residue arginine 167 participates in anthranilate binding. Residues aspartate 226 and glutamate 227 each coordinate Mg(2+).

The protein belongs to the anthranilate phosphoribosyltransferase family. As to quaternary structure, homodimer. Mg(2+) is required as a cofactor.

The catalysed reaction is N-(5-phospho-beta-D-ribosyl)anthranilate + diphosphate = 5-phospho-alpha-D-ribose 1-diphosphate + anthranilate. It participates in amino-acid biosynthesis; L-tryptophan biosynthesis; L-tryptophan from chorismate: step 2/5. Its function is as follows. Catalyzes the transfer of the phosphoribosyl group of 5-phosphorylribose-1-pyrophosphate (PRPP) to anthranilate to yield N-(5'-phosphoribosyl)-anthranilate (PRA). This Ralstonia nicotianae (strain ATCC BAA-1114 / GMI1000) (Ralstonia solanacearum) protein is Anthranilate phosphoribosyltransferase 2.